The primary structure comprises 123 residues: Large ribosomal subunit protein bL12 (123 aa).

The protein belongs to the bacterial ribosomal protein bL12 family. As to quaternary structure, homodimer. Part of the ribosomal stalk of the 50S ribosomal subunit. Forms a multimeric L10(L12)X complex, where L10 forms an elongated spine to which 2 to 4 L12 dimers bind in a sequential fashion. Binds GTP-bound translation factors.

Forms part of the ribosomal stalk which helps the ribosome interact with GTP-bound translation factors. Is thus essential for accurate translation. This chain is Large ribosomal subunit protein bL12, found in Parvibaculum lavamentivorans (strain DS-1 / DSM 13023 / NCIMB 13966).